Reading from the N-terminus, the 336-residue chain is Putative ataxin-3 homolog (336 aa).

A Josephin domain is found at 10 to 193; that stretch reads GGLLYHEVQE…KECPMATEGS (184 aa). C23 (nucleophile) is an active-site residue. The Proton acceptor role is filled by H132. The active site involves N147. A UIM domain is found at 244-263; that stretch reads QEEADLNAAIAASLMDTGGP. A disordered region spans residues 281–336; the sequence is IESTSGEMSKDGNLEEQGANKSETSEPNSDNIESASGSNPKQNTTSLEGKESIKED. A compositionally biased stretch (polar residues) spans 299-327; sequence ANKSETSEPNSDNIESASGSNPKQNTTSL.

It localises to the nucleus. The catalysed reaction is Thiol-dependent hydrolysis of ester, thioester, amide, peptide and isopeptide bonds formed by the C-terminal Gly of ubiquitin (a 76-residue protein attached to proteins as an intracellular targeting signal).. Its function is as follows. Interacts with key regulators of transcription and represses transcription. Acts as a histone-binding protein that regulates transcription. Acts as a deubiquitinating enzyme. The chain is Putative ataxin-3 homolog from Oryza sativa subsp. japonica (Rice).